Consider the following 353-residue polypeptide: MTHTVPQNMKAAVMHNTREIKIETLPVPDINHDEVLIKVMAVGICGSDLHYYTNGRIGNYVVEKPFILGHECAGEIAAVGSSVDQFKVGDRVAVEPGVTCGRCEACKEGRYNLCPDVQFLATPPVDGAFVQYIKMRQDFVFLIPDSLSYEEAALIEPFSVGIHAAARTKLQPGSTIAIMGMGPVGLMAVAAAKAFGAGTIIVTDLEPLRLEAAKKMGATHIINIREQDALEEIKTITNDRGVDVAWETAGNPAALQSALASVRRGGKLAIVGLPSQNEIPLNVPFIADNEIDIYGIFRYANTYPKGIEFLASGIVDTKHLVTDQYSLEQTQDAMERALQFKNECLKVMVYPNR.

Cys-45 is a binding site for Zn(2+). Tyr-51 provides a ligand contact to substrate. 2 residues coordinate Zn(2+): His-70 and Glu-71. Glu-156 is a substrate binding site. NAD(+) is bound by residues Val-184, Asp-204, Arg-209, 271–273 (VGL), and 296–298 (IFR). Substrate is bound by residues Arg-298 and Tyr-299.

This sequence belongs to the zinc-containing alcohol dehydrogenase family. In terms of assembly, homotetramer. It depends on Zn(2+) as a cofactor.

The catalysed reaction is keto-D-fructose + NADH + H(+) = D-sorbitol + NAD(+). It catalyses the reaction xylitol + NAD(+) = D-xylulose + NADH + H(+). The enzyme catalyses L-iditol + NAD(+) = keto-L-sorbose + NADH + H(+). Polyol dehydrogenase that catalyzes the NAD(+)-dependent oxidation of various sugar alcohols. Is mostly active with D-sorbitol (D-glucitol), xylitol and L-iditol as substrates, leading to the C2-oxidized products D-fructose, D-xylulose and L-sorbose, respectively. In Bacillus subtilis (strain 168), this protein is Sorbitol dehydrogenase.